Reading from the N-terminus, the 578-residue chain is Acyl-CoA ligase AFT1-1 (578 aa).

ATP is bound by residues 210–218, 350–355, aspartate 438, arginine 457, and lysine 554; these read SSGTSGAQK and QCYGAT. Positions 281-350 are SBD1; the sequence is GVEDLLSIVE…RHHPTWKIKQ (70 aa). The SBD2 stretch occupies residues 351–413; sequence CYGATEAGTA…VSSPSLAIGY (63 aa). Positions 576-578 match the Peroxisomal targeting signal type 1 motif; that stretch reads SKI.

The protein belongs to the ATP-dependent AMP-binding enzyme family.

The protein resides in the peroxisome. It participates in mycotoxin biosynthesis. Its function is as follows. Acyl-CoA ligase; part of the gene clusters that mediate the biosynthesis of the host-selective toxins (HSTs) AF-toxins responsible for Alternaria black spot of strawberry disease by the strawberry pathotype. AF-toxin I and III are valine derivatives of 2,3-dyhydroxy-isovaleric acid and 2-hydroxy-isovaleric acid respectively, while AF II is an isoleucine derivative of 2-hydroxy-valeric acid. These derivatives are bound to a 9,10-epoxy-8-hydroxy-9-methyl-decatrienoic acid (EDA) moiety. On cellular level, AF-toxins affect plasma membrane of susceptible cells and cause a sudden increase in loss of K(+) after a few minutes of toxin treatment. The aldo-keto reductase AFTS1 catalyzes the conversion of 2-keto-isovaleric acid (2-KIV) to 2-hydroxy-isovaleric acid (2-HIV) by reduction of its ketone to an alcohol. The acyl-CoA ligase AFT1, the hydrolase AFT2 and the enoyl-CoA hydratases AFT3 and AFT6, but also the polyketide synthase AFT9, the acyl-CoA dehydrogenase AFT10, the cytochrome P450 monooxygenase AFT11 and the oxidoreductase AFT12 are all involved in the biosynthesis of the AK-, AF- and ACT-toxin common EDA structural moiety. The exact role of each enzyme, and of additional enzymes identified within the AF-toxin clusters have still to be determined. The polypeptide is Acyl-CoA ligase AFT1-1 (Alternaria alternata (Alternaria rot fungus)).